An 844-amino-acid polypeptide reads, in one-letter code: E3 ubiquitin-protein ligase BRE1-like 2 (844 aa).

2 coiled-coil regions span residues 1 to 38 and 160 to 240; these read MDAA…RDEQ and EDVI…QLQT. Positions 244–269 are disordered; the sequence is SLMNTSAPNGVNGSVSTDKSSDKGMG. Residues 245–261 show a composition bias toward polar residues; sequence LMNTSAPNGVNGSVSTD. 2 coiled-coil regions span residues 290-604 and 640-670; these read ELHE…SEIE and KMKQ…ESSK. An RING-type zinc finger spans residues 792-831; the sequence is CGVCFDRPKEVVITKCFHLFCSPCIQRNLEIRHRKCPGCG.

It belongs to the BRE1 family.

It localises to the nucleus. The enzyme catalyses S-ubiquitinyl-[E2 ubiquitin-conjugating enzyme]-L-cysteine + [acceptor protein]-L-lysine = [E2 ubiquitin-conjugating enzyme]-L-cysteine + N(6)-ubiquitinyl-[acceptor protein]-L-lysine.. Its pathway is protein modification; protein ubiquitination. E3 ubiquitin-protein ligase that monoubiquitinates H2B to form H2BK143ub1. H2BK143ub1 gives a specific tag for epigenetic transcriptional activation and is also prerequisite for H3K4me and maybe H3K79me. It thereby plays a central role in histone code and gene regulation. Forms a ubiquitin ligase complex in cooperation with the E2 enzyme UBC2/RAD6. The protein is E3 ubiquitin-protein ligase BRE1-like 2 (BRE1B) of Oryza sativa subsp. indica (Rice).